Here is an 86-residue protein sequence, read N- to C-terminus: Anti-adapter protein IraP (86 aa).

Residues 1–38 (MKNLIAELLVKLAQKEEEAKELTVQVEALEIVVTALLR) adopt a coiled-coil conformation.

This sequence belongs to the IraP family. Interacts with RssB.

Its subcellular location is the cytoplasm. Its function is as follows. Inhibits RpoS proteolysis by regulating RssB activity, thereby increasing the stability of the sigma stress factor RpoS especially during phosphate starvation, but also in stationary phase and during nitrogen starvation. Its effect on RpoS stability is due to its interaction with RssB, which probably blocks the interaction of RssB with RpoS, and the consequent delivery of the RssB-RpoS complex to the ClpXP protein degradation pathway. This Klebsiella pneumoniae (strain 342) protein is Anti-adapter protein IraP.